A 296-amino-acid polypeptide reads, in one-letter code: AUGMIN subunit 2 (296 aa).

Coiled coils occupy residues 56–83 and 253–285; these read DDLI…QGRK and AVHK…NRRL. Residues 218 to 296 are disordered; the sequence is AVSLPTTPGG…WPPSVKKSSV (79 aa). Acidic residues predominate over residues 264-277; that stretch reads QNEEEEEEEEEEDG.

Belongs to the HAUS2 family. In terms of assembly, part of the augmin complex composed of 8 subunits. The complex acts on microtubules and interacts with gamma-tubulin in spindles and the phragmoplast.

Contributes to the assembly of the acentrosomal spindle and phragmoplast microtubule arrays as part of the augmin complex. This chain is AUGMIN subunit 2, found in Arabidopsis thaliana (Mouse-ear cress).